Reading from the N-terminus, the 1072-residue chain is Zinc finger MIZ domain-containing protein 1 (1072 aa).

Positions 1–120 (MNSMDRHIQQ…HQKSRQNDPP (120 aa)) are sufficient for transactivation activity; sufficient for interaction with NOTCH1. K91 is covalently cross-linked (Glycyl lysine isopeptide (Lys-Gly) (interchain with G-Cter in SUMO2)). 2 disordered regions span residues 112–141 (QKSR…TLSH) and 362–538 (TPSG…PYLS). Positions 128 to 141 (PLSSMSSMKPTLSH) are enriched in low complexity. Polar residues predominate over residues 419 to 436 (YGNQQYGPNSQFPTQPGQ). Over residues 437–446 (YPTPNPPRPL) the composition is skewed to pro residues. The span at 489–501 (SSGSSYSSYSQGS) shows a compositional bias: low complexity. Pro residues predominate over residues 517–528 (SPVPGNPTPPMT). The SP-RING-type zinc finger occupies 734–815 (GEDGVEQTAI…MWGILNAIQH (82 aa)). The Zn(2+) site is built by C765, H767, C788, and C791. Glycyl lysine isopeptide (Lys-Gly) (interchain with G-Cter in SUMO2) cross-links involve residues K841 and K850. The segment at 844-1072 (PDGIPSKRFK…DDLLSLFENN (229 aa)) is transactivation domain. Positions 875 to 886 (GPSPYPLPPPPG) are enriched in pro residues. Positions 875–1072 (GPSPYPLPPP…DDLLSLFENN (198 aa)) are disordered. Polar residues-rich tracts occupy residues 888-902 (TSSN…NYQG) and 958-968 (SSDQPHPSIQQ). Over residues 988–1001 (APPPSQPPRQPPQA) the composition is skewed to pro residues. The span at 1045–1072 (PDELLSYLDPPDLPSNSNDDLLSLFENN) shows a compositional bias: low complexity.

In terms of assembly, interacts with AR, but not with ESR1, NR3C1, PGR, THRB nor VDR. Interacts with NOTCH1 and RBPJ. Interacts with SMARCA4. Interacts (via SP-RING-type domain) with SMAD3 and SMAD4 (via MH2 domain). Expressed in brain.

The protein resides in the nucleus. Its subcellular location is the nucleoplasm. The protein localises to the cytoplasm. In terms of biological role, acts as a transcriptional coactivator. Increases ligand-dependent transcriptional activity of AR and promotes AR sumoylation. The stimulation of AR activity is dependent upon sumoylation. Also functions as a transcriptional coactivator in the TGF-beta signaling pathway by increasing the activity of the SMAD3/SMAD4 transcriptional complex. Involved in transcriptional activation of a subset of NOTCH1 target genes including MYC. Involved in thymocyte and T cell development. Involved in the regulation of postmitotic positioning of pyramidal neurons in the developing cerebral cortex. This Mus musculus (Mouse) protein is Zinc finger MIZ domain-containing protein 1 (Zmiz1).